Here is a 119-residue protein sequence, read N- to C-terminus: Large ribosomal subunit protein bL20 (119 aa).

It belongs to the bacterial ribosomal protein bL20 family.

In terms of biological role, binds directly to 23S ribosomal RNA and is necessary for the in vitro assembly process of the 50S ribosomal subunit. It is not involved in the protein synthesizing functions of that subunit. In Bacillus pumilus (strain SAFR-032), this protein is Large ribosomal subunit protein bL20.